A 233-amino-acid polypeptide reads, in one-letter code: Syntaxin-52 (233 aa).

At 1 to 209 the chain is on the cytoplasmic side; the sequence is MASSSDPWMR…NKSMKSGCSC (209 aa). The region spanning 137–199 is the t-SNARE coiled-coil homology domain; sequence RQVMREQDEG…RRVQKSLALM (63 aa). A helical; Anchor for type IV membrane protein membrane pass occupies residues 210-230; it reads MSMLLSVLGIVGLALVIWLLV. Over 231 to 233 the chain is Vesicular; sequence KYL.

The protein belongs to the syntaxin family. In terms of assembly, interacts either with VTI11 and SYP21, or with VTI11 and SYP22 in the prevacuolar compartment, or with VTI12 and SYP61 in the trans-Golgi network to form t-SNARE complexes. Expressed in root, leaf, stem, flower and silique.

The protein resides in the golgi apparatus. It is found in the trans-Golgi network membrane. It localises to the prevacuolar compartment membrane. In terms of biological role, vesicle trafficking protein that functions in the secretory pathway. The chain is Syntaxin-52 (SYP52) from Arabidopsis thaliana (Mouse-ear cress).